The following is a 386-amino-acid chain: Cytoplasmic 60S subunit biogenesis factor ZNF622 (386 aa).

The residue at position 2 (alanine 2) is an N-acetylalanine. 2 U1-type zinc fingers span residues 4–28 (YTCITCRVAFRDAEMQRAHYKTDWH) and 67–91 (TYCTVCSKKFATFNAYENHLKSRRH). The interval 135–237 (AIKAQPSTSP…AEDAEAEESP (103 aa)) is disordered. A compositionally biased stretch (basic and acidic residues) spans 165–176 (GTPERDPTEKPP). Positions 194 to 235 (EESEEEGEEDDEDWEDIDSDDGLECENPGVEEEDAEDAEAEE) are enriched in acidic residues. Position 269 is a phosphoserine (serine 269).

Belongs to the REI1 family. In terms of assembly, homo- and heterodimer. Associates with pre-60S ribosomal particles. Interacts with MELK and MYBL2. Interacts with DNAJC21. In terms of processing, phosphorylated by MELK. The phosphorylation may redirect the protein to the nucleus. Post-translationally, ubiquitinated by HECTD1, leading to its degradation.

It localises to the cytoplasm. It is found in the nucleus. Pre-60S-associated cytoplasmic factor involved in the cytoplasmic maturation of the 60S subunit. The protein is Cytoplasmic 60S subunit biogenesis factor ZNF622 (Znf622) of Rattus norvegicus (Rat).